Consider the following 24-residue polypeptide: Neurotoxin-2 (24 aa).

The region spanning 1-24 is the LCN-type CS-alpha/beta domain; the sequence is EDGYLLNRDTGCKVSCGTCRYCND.

It belongs to the long (4 C-C) scorpion toxin superfamily. Sodium channel inhibitor family. Alpha subfamily. In terms of tissue distribution, expressed by the venom gland.

The protein localises to the secreted. Its function is as follows. Binds to sodium channels (Nav) and inhibits the inactivation of the activated channels, thereby blocking neuronal transmission. This toxin is active against mammals. This is Neurotoxin-2 from Hottentotta tamulus (Eastern Indian scorpion).